A 190-amino-acid chain; its full sequence is Superoxide dismutase [Cu-Zn] (190 aa).

The N-terminal stretch at 1–23 is a signal peptide; that stretch reads MKLTNLALAFTLFGASAVAFAHA. Cu cation-binding residues include histidine 83, histidine 85, and histidine 108. A disulfide bond links cysteine 90 and cysteine 186. Zn(2+)-binding residues include histidine 108, histidine 117, histidine 126, and aspartate 129. Positions 162–181 are disordered; sequence MIHEGGDNHSDHPAPLGGGG. Histidine 164 serves as a coordination point for Cu cation.

It belongs to the Cu-Zn superoxide dismutase family. In terms of assembly, homodimer. Cu cation is required as a cofactor. The cofactor is Zn(2+).

The protein resides in the periplasm. It catalyses the reaction 2 superoxide + 2 H(+) = H2O2 + O2. Its function is as follows. Destroys radicals which are normally produced within the cells and which are toxic to biological systems. This Actinobacillus pleuropneumoniae (Haemophilus pleuropneumoniae) protein is Superoxide dismutase [Cu-Zn] (sodC).